The following is a 1426-amino-acid chain: A disintegrin and metalloproteinase with thrombospondin motifs 13 (1426 aa).

The first 33 residues, 1-33 (MSQLCLWLTCQPCYAVSVRGILTGAIFILGCWG), serve as a signal peptide directing secretion. Positions 34 to 76 (LSDFQKSLLQDLEPKDVSSYFGHHAAPFTGHPPSHLQRLRRRR) are excised as a propeptide. One can recognise a Peptidase M12B domain in the interval 74–291 (RRRTLEDILH…GQMHCFQDPP (218 aa)). Residue Glu85 participates in Ca(2+) binding. Asn144 and Asn148 each carry an N-linked (GlcNAc...) asparagine glycan. Cystine bridges form between Cys157–Cys210, Cys204–Cys286, and Cys246–Cys270. Asp175, Asp184, Glu186, Asp189, and Glu214 together coordinate Ca(2+). His226 contacts Zn(2+). Glu227 is a catalytic residue. Residues His230 and His236 each coordinate Zn(2+). Residues Thr281 and Asp289 each contribute to the Ca(2+) site. In terms of domain architecture, Disintegrin spans 295–388 (SGLTRHQLMA…LAELAPVAAV (94 aa)). Intrachain disulfides connect Cys316–Cys342, Cys327–Cys352, Cys337–Cys371, Cys365–Cys376, Cys401–Cys438, Cys405–Cys443, Cys416–Cys428, Cys488–Cys527, Cys513–Cys532, Cys537–Cys553, and Cys550–Cys560. The TSP type-1 1 domain maps to 389-444 (HGHWSSWGPHSPCSRSCGGGVITRRRWCNNPRPAFGGRACVGEDLQAKMCNTQACE). Residues 445–561 (KTQLEFMSEQ…VCGGDNSTCS (117 aa)) are cysteine-rich. Positions 503–505 (RGD) match the Cell attachment site motif. Residues 556-685 (DNSTCSSRNG…PDITFSYFQL (130 aa)) are spacer. N-linked (GlcNAc...) asparagine glycans are attached at residues Asn557, Asn564, Asn584, and Asn619. 7 consecutive TSP type-1 domains span residues 687 to 746 (QQAA…VSAP), 747 to 810 (CSPY…QPCP), 808 to 871 (PCPT…SLCS), 904 to 957 (WTPL…RARP), 958 to 1019 (CPAR…EPCP), 1020 to 1078 (ARWK…IADC), and 1079 to 1137 (AFRW…GPCA). O-linked (Fuc...) serine glycosylation is found at Ser703 and Ser762. Asn834 is a glycosylation site (N-linked (GlcNAc...) asparagine). Ser914 carries an O-linked (Fuc...) serine glycan. A glycan (O-linked (Fuc...) threonine) is linked at Thr973. Residue Ser1033 is glycosylated (O-linked (Fuc...) serine). Asn1057 carries an N-linked (GlcNAc...) asparagine glycan. O-linked (Fuc...) serine glycosylation occurs at Ser1093. 2 CUB domains span residues 1195–1302 (ACGR…FYKE) and 1293–1426 (QPAP…LALS).

Requires Zn(2+) as cofactor. The cofactor is Ca(2+). In terms of processing, the precursor is processed by a furin endopeptidase which cleaves off the pro-domain. O-glycosylated. O-fucosylated by POFUT2 on a serine or a threonine residue found within the consensus sequence C1-X(2)-(S/T)-C2-G of the TSP type-1 repeat domains where C1 and C2 are the first and second cysteine residue of the repeat, respectively. Fucosylated repeats can then be further glycosylated by the addition of a beta-1,3-glucose residue by the glucosyltransferase, B3GALTL. Fucosylation mediates the efficient secretion of ADAMTS13. May also be C-glycosylated on tryptophan residues within the consensus sequence W-X-X-W of the TPRs, and also N-glycosylated. These other glycosylations can also facilitate secretion. Plasma. Expression is consistently high in liver, medium in lung and spleen, low in skeletal muscle and undetectable in heart, brain, kidney and testis.

It localises to the secreted. The catalysed reaction is The enzyme cleaves the von Willebrand factor at bond 842-Tyr-|-Met-843 within the A2 domain.. Zinc and calcium ions cooperatively modulate enzyme activity. The cleavage of the pro-domain is not required for protease activity. Dependence on calcium for proteolytic activity is mediated by the high affinity site. Cleaves the vWF multimers in plasma into smaller forms thereby controlling vWF-mediated platelet thrombus formation. This chain is A disintegrin and metalloproteinase with thrombospondin motifs 13 (Adamts13), found in Mus musculus (Mouse).